Here is a 320-residue protein sequence, read N- to C-terminus: Uroplakin-3b (320 aa).

The signal sequence occupies residues 1–29 (MGLPWGQPHLGLQMLLLALNCLRPSLSLG). Residues 30 to 240 (EWGSWMDASS…LHPLFSGRPP (211 aa)) are Lumenal-facing. N-linked (GlcNAc...) asparagine glycosylation occurs at Asn-133. The chain crosses the membrane as a helical span at residues 241–266 (TLGLLGSLYHALLQPVVAGGGPGAAA). Over 267–320 (DRLLHGQALHDPPHPTQRGRHTAGGLQAWPGPPPQPQPLAWPLCMGLGEMGRWE) the chain is Cytoplasmic. The interval 273-303 (QALHDPPHPTQRGRHTAGGLQAWPGPPPQPQ) is disordered.

This sequence belongs to the uroplakin-3 family. In terms of assembly, heterodimer with uroplakin-1B (UPK1B).

It localises to the cell membrane. Component of the asymmetric unit membrane (AUM); a highly specialized biomembrane elaborated by terminally differentiated urothelial cells. May play an important role in AUM-cytoskeleton interaction in terminally differentiated urothelial cells. It also contributes to the formation of urothelial glycocalyx which may play an important role in preventing bacterial adherence. This is Uroplakin-3b (UPK3B) from Homo sapiens (Human).